The following is a 59-amino-acid chain: uncharacterized protein (59 aa).

An N-terminal signal peptide occupies residues 1-17 (MIASIWYAELGCASAIA).

This is an uncharacterized protein from Rickettsia prowazekii (strain Madrid E).